Here is a 343-residue protein sequence, read N- to C-terminus: MLVLGIESTCDETACAIVRDGKDILSNIVASQIDLHKEYGGVVPELACRRHIDLIIPVIDQALNQAKLTLEQIDLIAVANGPGLIGALLIGLNTAKALALALRKPFIGINHVEAHLYAAIMSHPQDFQFPCLGVVLSGGHTALVLIKQIGQYELIGQTVDDAVGEAFDKVAKMLNLPYPGGPEIENLARHGRSVKFNFKAGQVKGRPLDFSFSGLKTAVLYAIKDPKALKEMVLLSSEMTQDIAASFQEAACSDIVKKSLLAAKQYGVNTLLFGGGVTNNCYLRKLFSVANSNLNYIWPSAGLSLDNAAMIAGLGYYRYQLQNKSDSMDLEPLTRTPLQSVKE.

Fe cation is bound by residues H111 and H115. Substrate is bound by residues 135–139, D168, G181, and N280; that span reads VLSGG. D306 is a binding site for Fe cation.

Belongs to the KAE1 / TsaD family. Fe(2+) serves as cofactor.

It localises to the cytoplasm. It carries out the reaction L-threonylcarbamoyladenylate + adenosine(37) in tRNA = N(6)-L-threonylcarbamoyladenosine(37) in tRNA + AMP + H(+). Required for the formation of a threonylcarbamoyl group on adenosine at position 37 (t(6)A37) in tRNAs that read codons beginning with adenine. Is involved in the transfer of the threonylcarbamoyl moiety of threonylcarbamoyl-AMP (TC-AMP) to the N6 group of A37, together with TsaE and TsaB. TsaD likely plays a direct catalytic role in this reaction. The sequence is that of tRNA N6-adenosine threonylcarbamoyltransferase from Protochlamydia amoebophila (strain UWE25).